A 633-amino-acid polypeptide reads, in one-letter code: Threonine--tRNA ligase (633 aa).

A TGS domain is found at 1–59 (MIKVTFLAEQKVKEYSGRVTGFDILQPDALREAIAFKVNGELYDLSREIESDTEIEVIQ). A catalytic region spans residues 240–532 (DHRKIAKDMD…LIENYAGKFP (293 aa)). Zn(2+)-binding residues include C332, H383, and H509.

It belongs to the class-II aminoacyl-tRNA synthetase family. In terms of assembly, homodimer. The cofactor is Zn(2+).

The protein resides in the cytoplasm. It carries out the reaction tRNA(Thr) + L-threonine + ATP = L-threonyl-tRNA(Thr) + AMP + diphosphate + H(+). In terms of biological role, catalyzes the attachment of threonine to tRNA(Thr) in a two-step reaction: L-threonine is first activated by ATP to form Thr-AMP and then transferred to the acceptor end of tRNA(Thr). Also edits incorrectly charged L-seryl-tRNA(Thr). This Wolbachia pipientis subsp. Culex pipiens (strain wPip) protein is Threonine--tRNA ligase.